Here is a 501-residue protein sequence, read N- to C-terminus: Putative zinc metalloprotease TM_0890 (501 aa).

His17 serves as a coordination point for Zn(2+). Glu18 is a catalytic residue. Residue His21 participates in Zn(2+) binding. Transmembrane regions (helical) follow at residues 93–115 (FLITLAGPLFSILAGYLLFLPIT), 401–420 (VQTGQIVGVVGLAGVISAAS), 427–449 (VLTVVAVITISLGVLNLLPLPAL), and 474–496 (IIHFLGFIFLMILFLYITFLDIG). A PDZ domain is found at 96–180 (TLAGPLFSIL…LVIIRNGEKK (85 aa)).

The protein belongs to the peptidase M50B family. The cofactor is Zn(2+).

It localises to the cell inner membrane. The polypeptide is Putative zinc metalloprotease TM_0890 (Thermotoga maritima (strain ATCC 43589 / DSM 3109 / JCM 10099 / NBRC 100826 / MSB8)).